The chain runs to 491 residues: La-related protein 6 (491 aa).

The tract at residues 1-87 (MAQSGGEARP…REDLEQEWKP (87 aa)) is disordered. Position 2 is an N-acetylalanine (alanine 2). Positions 24–37 (EAEDVDELEDEEEG) are enriched in acidic residues. A phosphoserine mark is found at serine 56 and serine 58. The HTH La-type RNA-binding domain maps to 86–177 (KPPDEELIKK…RRTTPVPLFP (92 aa)). The RRM domain maps to 184-296 (KMLLVYDLYL…KAVLIGMKPP (113 aa)). The Nuclear export signal signature appears at 186–193 (LLVYDLYL). 2 disordered regions span residues 293-403 (MKPP…EEGR) and 423-491 (SSVT…RACV). The short motif at 296 to 302 (PKKKPAK) is the Nuclear localization signal element. A compositionally biased stretch (low complexity) spans 332 to 346 (DESSANSSSDPESNP). Polar residues-rich tracts occupy residues 359-386 (NKLS…SSPL) and 444-453 (QEKSPGTSPL). The region spanning 427–485 (PSGSPWVRRRRQAEMGTQEKSPGTSPLLSRKMQTADGLPVGVLRLPRGPDNTRGFHGHE) is the SUZ-C domain. Positions 482-491 (HGHERSRACV) are enriched in basic and acidic residues.

In terms of assembly, interacts (via the HTH domain) with VIM/vimentin. Interacts (via C-terminus) with non-muscle myosin MYH10. Interacts (via C-terminus) with DHX9. Expressed in numerous tissues.

The protein resides in the cytoplasm. Its subcellular location is the nucleus. Regulates the coordinated translation of type I collagen alpha-1 and alpha-2 mRNAs, CO1A1 and CO1A2. Stabilizes mRNAs through high-affinity binding of a stem-loop structure in their 5' UTR. This regulation requires VIM and MYH10 filaments, and the helicase DHX9. The protein is La-related protein 6 (LARP6) of Homo sapiens (Human).